The following is a 113-amino-acid chain: Protein RALF-like 31 (113 aa).

An N-terminal signal peptide occupies residues 1 to 21 (MFNSTALVIFAILFLLISADA). A propeptide spans 22–58 (FPIPSPNGEIDAMLIRNSIIGEDEDLMPTEISRRVLM) (removed in mature form). Intrachain disulfides connect Cys76–Cys86 and Cys98–Cys104.

Belongs to the plant rapid alkalinization factor (RALF) family. Post-translationally, proteolytically cleaved, probably by S1P, a subtilisin-like serine protease (subtilase).

It is found in the secreted. In terms of biological role, cell signaling peptide that may regulate plant stress, growth, and development. Mediates a rapid alkalinization of extracellular space by mediating a transient increase in the cytoplasmic Ca(2+) concentration leading to a calcium-dependent signaling events through a cell surface receptor and a concomitant activation of some intracellular mitogen-activated protein kinases. In Arabidopsis thaliana (Mouse-ear cress), this protein is Protein RALF-like 31 (RALFL31).